Consider the following 457-residue polypeptide: GTPase Der (457 aa).

EngA-type G domains follow at residues 4-169 and 177-352; these read PTIA…PENN and IMMS…NQHR. GTP is bound by residues 10-17, 57-61, 120-123, 183-190, 230-234, and 295-298; these read GRPNVGKS, DTGGL, NKCE, DTAGI, and NKWD. Residues 353–438 form the KH-like domain; it reads RRVTTSVVNE…PLILLWRGKQ (86 aa).

The protein belongs to the TRAFAC class TrmE-Era-EngA-EngB-Septin-like GTPase superfamily. EngA (Der) GTPase family. Associates with the 50S ribosomal subunit.

Its function is as follows. GTPase that plays an essential role in the late steps of ribosome biogenesis. The protein is GTPase Der of Prochlorococcus marinus (strain MIT 9215).